The primary structure comprises 95 residues: UPF0045 protein CPE1503 (95 aa).

It belongs to the UPF0045 family.

This Clostridium perfringens (strain 13 / Type A) protein is UPF0045 protein CPE1503.